The following is a 140-amino-acid chain: MNRIMGIDYGLKRIGIAITDFLRITASPFDTVKNVSLKKNALKILEIAKNRDVSIIVLGLPLNMNGTEGGMAETVRKFIEKIKFLSDIEVTTVDERLTTVQAERMLIEEADISREKRKGIKDKVVAALILQTYLDIQSDE.

It belongs to the YqgF nuclease family.

The protein resides in the cytoplasm. Functionally, could be a nuclease involved in processing of the 5'-end of pre-16S rRNA. This chain is Putative pre-16S rRNA nuclease, found in Endomicrobium trichonymphae.